Here is a 603-residue protein sequence, read N- to C-terminus: Proline--tRNA ligase (603 aa).

It belongs to the class-II aminoacyl-tRNA synthetase family. ProS type 1 subfamily. In terms of assembly, homodimer.

It is found in the cytoplasm. It carries out the reaction tRNA(Pro) + L-proline + ATP = L-prolyl-tRNA(Pro) + AMP + diphosphate. Its function is as follows. Catalyzes the attachment of proline to tRNA(Pro) in a two-step reaction: proline is first activated by ATP to form Pro-AMP and then transferred to the acceptor end of tRNA(Pro). As ProRS can inadvertently accommodate and process non-cognate amino acids such as alanine and cysteine, to avoid such errors it has two additional distinct editing activities against alanine. One activity is designated as 'pretransfer' editing and involves the tRNA(Pro)-independent hydrolysis of activated Ala-AMP. The other activity is designated 'posttransfer' editing and involves deacylation of mischarged Ala-tRNA(Pro). The misacylated Cys-tRNA(Pro) is not edited by ProRS. This is Proline--tRNA ligase from Synechocystis sp. (strain ATCC 27184 / PCC 6803 / Kazusa).